We begin with the raw amino-acid sequence, 330 residues long: Glycerol-3-phosphate dehydrogenase [NAD(P)+] (330 aa).

Residues Ser14, Phe15, Arg35, and Lys109 each coordinate NADPH. Positions 109 and 137 each coordinate sn-glycerol 3-phosphate. An NADPH-binding site is contributed by Ala141. Sn-glycerol 3-phosphate is bound by residues Lys192, Asp248, Ser258, Arg259, and Asn260. The active-site Proton acceptor is the Lys192. Arg259 lines the NADPH pocket. Leu283 and Glu285 together coordinate NADPH.

The protein belongs to the NAD-dependent glycerol-3-phosphate dehydrogenase family.

The protein localises to the cytoplasm. The catalysed reaction is sn-glycerol 3-phosphate + NAD(+) = dihydroxyacetone phosphate + NADH + H(+). The enzyme catalyses sn-glycerol 3-phosphate + NADP(+) = dihydroxyacetone phosphate + NADPH + H(+). It participates in membrane lipid metabolism; glycerophospholipid metabolism. Catalyzes the reduction of the glycolytic intermediate dihydroxyacetone phosphate (DHAP) to sn-glycerol 3-phosphate (G3P), the key precursor for phospholipid synthesis. The sequence is that of Glycerol-3-phosphate dehydrogenase [NAD(P)+] from Rickettsia massiliae (strain Mtu5).